The primary structure comprises 180 residues: Endogenous alpha-amylase/subtilisin inhibitor (180 aa).

2 disulfide bridges follow: cysteine 42–cysteine 89 and cysteine 143–cysteine 147.

The protein belongs to the protease inhibitor I3 (leguminous Kunitz-type inhibitor) family.

Inhibitor of endogenous alpha-amylase (wheat also produces an exogenous inhibitor which inactivates alpha-amylase from animal and insect origin). This inhibitor can also inhibit subtilisin. The sequence is that of Endogenous alpha-amylase/subtilisin inhibitor from Triticum aestivum (Wheat).